A 131-amino-acid chain; its full sequence is Agouti-signaling protein (131 aa).

A signal peptide spans 1-20 (MNIFRLLLATLLVSLCFLTA). N-linked (GlcNAc...) asparagine glycosylation is present at Asn38. The tract at residues 57 to 104 (KSKKISRKEAEKKRSSKKKASMKNVARPRPPPPNPCVATRNSCKSPAP) is disordered. 5 disulfide bridges follow: Cys92–Cys107, Cys99–Cys113, Cys106–Cys124, Cys110–Cys131, and Cys115–Cys122. Residues 92–131 (CVATRNSCKSPAPACCDPCASCQCRFFRSACTCRVLSPSC) enclose the Agouti domain.

The protein localises to the secreted. Involved in the regulation of melanogenesis. The binding of ASP to MC1R precludes alpha-MSH initiated signaling and thus blocks production of cAMP, leading to a down-regulation of eumelanogenesis (brown/black pigment) and thus increasing synthesis of pheomelanin (yellow/red pigment). The sequence is that of Agouti-signaling protein (ASIP) from Vulpes vulpes (Red fox).